The primary structure comprises 298 residues: Adaptation to cold protein C (298 aa).

In terms of assembly, interacts with the C-terminal extension of AtcJ. Also interacts with AtcB, but not with AtcA.

With respect to regulation, interaction with AtcJ stabilizes AtcC. Its function is as follows. Involved in cold adaptation. The protein is Adaptation to cold protein C of Shewanella oneidensis (strain ATCC 700550 / JCM 31522 / CIP 106686 / LMG 19005 / NCIMB 14063 / MR-1).